Reading from the N-terminus, the 350-residue chain is tRNA N6-adenosine threonylcarbamoyltransferase (350 aa).

Positions 117 and 121 each coordinate Fe cation. Residues 140-144 (LVSGG), D173, G186, and N277 each bind substrate. D305 provides a ligand contact to Fe cation.

The protein belongs to the KAE1 / TsaD family. The cofactor is Fe(2+).

The protein localises to the cytoplasm. The enzyme catalyses L-threonylcarbamoyladenylate + adenosine(37) in tRNA = N(6)-L-threonylcarbamoyladenosine(37) in tRNA + AMP + H(+). Its function is as follows. Required for the formation of a threonylcarbamoyl group on adenosine at position 37 (t(6)A37) in tRNAs that read codons beginning with adenine. Is involved in the transfer of the threonylcarbamoyl moiety of threonylcarbamoyl-AMP (TC-AMP) to the N6 group of A37, together with TsaE and TsaB. TsaD likely plays a direct catalytic role in this reaction. In Novosphingobium aromaticivorans (strain ATCC 700278 / DSM 12444 / CCUG 56034 / CIP 105152 / NBRC 16084 / F199), this protein is tRNA N6-adenosine threonylcarbamoyltransferase.